We begin with the raw amino-acid sequence, 340 residues long: Protein B17 (340 aa).

This sequence belongs to the orthopoxvirus B17 protein family.

This chain is Protein B17, found in Variola virus (isolate Human/India/Ind3/1967) (VARV).